We begin with the raw amino-acid sequence, 161 residues long: MTDSAAEPTISQPQHVVIYTDGACKGNPGPGGWGALLASGGTEKEIFGGEMGTTNNRMEMTAVIEALAALKKPCTVTLYLDSQYVLKGITEWIHGWKARGWRTAAKAPVKNVDLWQRLDALLVSSGHSIDWRWVRGHNGDPGNERADALANKGVERALGRL.

Residues 12–155 (QPQHVVIYTD…ADALANKGVE (144 aa)) form the RNase H type-1 domain. Positions 21, 59, 81, and 147 each coordinate Mg(2+).

This sequence belongs to the RNase H family. Monomer. Mg(2+) is required as a cofactor.

Its subcellular location is the cytoplasm. It catalyses the reaction Endonucleolytic cleavage to 5'-phosphomonoester.. Its function is as follows. Endonuclease that specifically degrades the RNA of RNA-DNA hybrids. This Polaromonas naphthalenivorans (strain CJ2) protein is Ribonuclease H.